The sequence spans 137 residues: Large ribosomal subunit protein uL16 (137 aa).

Belongs to the universal ribosomal protein uL16 family. Part of the 50S ribosomal subunit.

Binds 23S rRNA and is also seen to make contacts with the A and possibly P site tRNAs. This Xylella fastidiosa (strain M23) protein is Large ribosomal subunit protein uL16.